We begin with the raw amino-acid sequence, 222 residues long: MSVKDVNKRSGELEGKLKGKLFLGGTKPSKEDVKLFNDLLGAENTSLYLWVKHMTSFTEAERKAWGAPVKVTATTSASAPAKQAPKKAASAPAKQADEDEEIDLFGEATEEETAALEAKKKKDTDAKKAKKEVIAKSSILFDVKPWDDTVDLQALANKLHAVKRDGLLWGDHKLVPVAFGVKKLQQLIVIEDDKVLSDDLEELIMSFEDEVQSMDIVAWNKI.

Positions 75–94 (TSASAPAKQAPKKAASAPAK) are enriched in low complexity. The disordered stretch occupies residues 75-98 (TSASAPAKQAPKKAASAPAKQADE).

Belongs to the EF-1-beta/EF-1-delta family. EF-1 is composed of 4 subunits: alpha, beta, delta, and gamma.

EF-1-beta and EF-1-delta stimulate the exchange of GDP bound to EF-1-alpha to GTP. This is 25 kDa elongation factor 1-beta from Trypanosoma cruzi.